The sequence spans 301 residues: Protein FdhE homolog (301 aa).

Belongs to the FdhE family.

Its subcellular location is the cytoplasm. In terms of biological role, necessary for formate dehydrogenase activity. The polypeptide is Protein FdhE homolog (Shewanella baltica (strain OS185)).